Here is a 185-residue protein sequence, read N- to C-terminus: Large ribosomal subunit protein uL5m (185 aa).

It belongs to the universal ribosomal protein uL5 family. As to quaternary structure, component of the mitochondrial ribosome large subunit.

Its subcellular location is the mitochondrion. The sequence is that of Large ribosomal subunit protein uL5m (RPL5) from Arabidopsis thaliana (Mouse-ear cress).